The primary structure comprises 491 residues: Transmembrane protein 39B (491 aa).

Residues 1-56 (MAGGRRGANRTTYCRSPLSNDTGSVGNGNHSTSSPVTGVRSRTRNGSGTGMSSPPL) are disordered. Asn-9, Asn-20, Asn-29, and Asn-45 each carry an N-linked (GlcNAc...) asparagine glycan. Polar residues-rich tracts occupy residues 9–36 (NRTTYCRSPLSNDTGSVGNGNHSTSSPV) and 44–56 (RNGSGTGMSSPPL). 8 helical membrane passes run 79 to 99 (LFELHLFACHLIALFVHYVNI), 115 to 135 (TSLNFHLIDYNMLVFTVIVLA), 152 to 172 (LSFPHSVFLVTARFAVLTLAG), 185 to 205 (TYSVLSLLFLCYPFGMYIPFF), 290 to 310 (EVLVSSMLSAYYVAFVPVWFV), 322 to 342 (CELFILVSVSTSVILMRHLLP), 423 to 443 (ILNILIILEGAMIFYQLYSLM), and 449 to 469 (HQTISLALILFSNYYAFFKLL).

The protein belongs to the TMEM39 family. In terms of tissue distribution, expressed in the ovary, followed by the intestine and brain.

Its subcellular location is the endoplasmic reticulum membrane. Its function is as follows. May protect the cells against DNA damage caused by exposure to the cold-warming stress and facilitates tissue damage repair during the recovery phase. The chain is Transmembrane protein 39B from Danio rerio (Zebrafish).